Consider the following 353-residue polypeptide: Phenol hydroxylase P5 protein (353 aa).

Positions 3–93 (YQVTIEPIGT…DMVIEADVDE (91 aa)) constitute a 2Fe-2S ferredoxin-type domain. [2Fe-2S] cluster is bound by residues C37, C42, C45, and C77. The FAD-binding FR-type domain maps to 102 to 201 (VQDYQATVIE…SGPYGQFFVR (100 aa)).

In terms of assembly, the multicomponent enzyme phenol hydroxylase is formed by P0, P1, P2, P3, P4 and P5 polypeptides. FAD serves as cofactor. It depends on [2Fe-2S] cluster as a cofactor.

It catalyses the reaction phenol + NADPH + O2 + H(+) = catechol + NADP(+) + H2O. The protein operates within aromatic compound metabolism; phenol degradation. Its function is as follows. Catabolizes phenol, and some of its methylated derivatives. P5 is required for growth on phenol, and for in vitro phenol hydroxylase activity. Functionally, probable electron transfer from NADPH, via FAD and the 2Fe-2S center, to the oxygenase activity site of the enzyme. This chain is Phenol hydroxylase P5 protein (mphP), found in Acinetobacter pittii (strain PHEA-2).